We begin with the raw amino-acid sequence, 397 residues long: Tryptophan synthase beta chain (397 aa).

An N6-(pyridoxal phosphate)lysine modification is found at lysine 88.

It belongs to the TrpB family. Tetramer of two alpha and two beta chains. Pyridoxal 5'-phosphate serves as cofactor.

It catalyses the reaction (1S,2R)-1-C-(indol-3-yl)glycerol 3-phosphate + L-serine = D-glyceraldehyde 3-phosphate + L-tryptophan + H2O. The protein operates within amino-acid biosynthesis; L-tryptophan biosynthesis; L-tryptophan from chorismate: step 5/5. Functionally, the beta subunit is responsible for the synthesis of L-tryptophan from indole and L-serine. The sequence is that of Tryptophan synthase beta chain from Haemophilus influenzae (strain PittEE).